Consider the following 265-residue polypeptide: 4-diphosphocytidyl-2-C-methyl-D-erythritol kinase (265 aa).

Lys8 is an active-site residue. Pro95 to Ser105 provides a ligand contact to ATP. Asp135 is an active-site residue.

The protein belongs to the GHMP kinase family. IspE subfamily.

It carries out the reaction 4-CDP-2-C-methyl-D-erythritol + ATP = 4-CDP-2-C-methyl-D-erythritol 2-phosphate + ADP + H(+). Its pathway is isoprenoid biosynthesis; isopentenyl diphosphate biosynthesis via DXP pathway; isopentenyl diphosphate from 1-deoxy-D-xylulose 5-phosphate: step 3/6. Catalyzes the phosphorylation of the position 2 hydroxy group of 4-diphosphocytidyl-2C-methyl-D-erythritol. This chain is 4-diphosphocytidyl-2-C-methyl-D-erythritol kinase, found in Ureaplasma parvum serovar 3 (strain ATCC 27815 / 27 / NCTC 11736).